A 360-amino-acid polypeptide reads, in one-letter code: tRNA-specific 2-thiouridylase MnmA (360 aa).

Residues 9–16 (AMSGGVDS) and Leu35 contribute to the ATP site. Cys104 functions as the Nucleophile in the catalytic mechanism. A disulfide bond links Cys104 and Cys197. Gly128 contributes to the ATP binding site. An interaction with tRNA region spans residues 147–149 (KDQ). Catalysis depends on Cys197, which acts as the Cysteine persulfide intermediate.

This sequence belongs to the MnmA/TRMU family.

It localises to the cytoplasm. It carries out the reaction S-sulfanyl-L-cysteinyl-[protein] + uridine(34) in tRNA + AH2 + ATP = 2-thiouridine(34) in tRNA + L-cysteinyl-[protein] + A + AMP + diphosphate + H(+). Functionally, catalyzes the 2-thiolation of uridine at the wobble position (U34) of tRNA, leading to the formation of s(2)U34. This chain is tRNA-specific 2-thiouridylase MnmA, found in Salinispora tropica (strain ATCC BAA-916 / DSM 44818 / JCM 13857 / NBRC 105044 / CNB-440).